The sequence spans 340 residues: N-acetyl-gamma-glutamyl-phosphate reductase (340 aa).

The active site involves Cys-147.

This sequence belongs to the NAGSA dehydrogenase family. Type 1 subfamily.

It localises to the cytoplasm. It carries out the reaction N-acetyl-L-glutamate 5-semialdehyde + phosphate + NADP(+) = N-acetyl-L-glutamyl 5-phosphate + NADPH + H(+). It participates in amino-acid biosynthesis; L-arginine biosynthesis; N(2)-acetyl-L-ornithine from L-glutamate: step 3/4. Catalyzes the NADPH-dependent reduction of N-acetyl-5-glutamyl phosphate to yield N-acetyl-L-glutamate 5-semialdehyde. The polypeptide is N-acetyl-gamma-glutamyl-phosphate reductase (Lactococcus lactis subsp. lactis (strain IL1403) (Streptococcus lactis)).